The sequence spans 204 residues: Ribosomal RNA small subunit methyltransferase J (204 aa).

Residues 55–56 (RD), 71–72 (ER), and Asp123 contribute to the S-adenosyl-L-methionine site.

The protein belongs to the methyltransferase superfamily. RsmJ family.

It localises to the cytoplasm. It catalyses the reaction guanosine(1516) in 16S rRNA + S-adenosyl-L-methionine = N(2)-methylguanosine(1516) in 16S rRNA + S-adenosyl-L-homocysteine + H(+). In terms of biological role, specifically methylates the guanosine in position 1516 of 16S rRNA. This is Ribosomal RNA small subunit methyltransferase J from Rhodopseudomonas palustris (strain TIE-1).